Here is a 523-residue protein sequence, read N- to C-terminus: Cytochrome P450 52A3-B (523 aa).

Residues 17–34 (WYTILFGAAFTYFLSIAL) traverse the membrane as a helical segment. Cys-471 is a binding site for heme.

Belongs to the cytochrome P450 family. It depends on heme as a cofactor.

Its subcellular location is the membrane. In terms of biological role, together with an NADPH cytochrome P450 the enzyme system catalyzes the terminal hydroxylation as the first step in the assimilation of alkanes and fatty acids. This is Cytochrome P450 52A3-B (CYP52A3-B) from Candida maltosa (Yeast).